Consider the following 447-residue polypeptide: Tubulin beta chain (447 aa).

Gln11, Glu69, Ser138, Gly142, Thr143, Gly144, Asn204, and Asn226 together coordinate GTP. Glu69 serves as a coordination point for Mg(2+). The tract at residues 421 to 447 (EYQQYQDASISEGEEEYEEEAPMEPEE) is disordered. A compositionally biased stretch (acidic residues) spans 432–447 (EGEEEYEEEAPMEPEE).

The protein belongs to the tubulin family. Dimer of alpha and beta chains. A typical microtubule is a hollow water-filled tube with an outer diameter of 25 nm and an inner diameter of 15 nM. Alpha-beta heterodimers associate head-to-tail to form protofilaments running lengthwise along the microtubule wall with the beta-tubulin subunit facing the microtubule plus end conferring a structural polarity. Microtubules usually have 13 protofilaments but different protofilament numbers can be found in some organisms and specialized cells. The cofactor is Mg(2+).

The protein localises to the cytoplasm. It localises to the cytoskeleton. Its function is as follows. Tubulin is the major constituent of microtubules, a cylinder consisting of laterally associated linear protofilaments composed of alpha- and beta-tubulin heterodimers. Microtubules grow by the addition of GTP-tubulin dimers to the microtubule end, where a stabilizing cap forms. Below the cap, tubulin dimers are in GDP-bound state, owing to GTPase activity of alpha-tubulin. The polypeptide is Tubulin beta chain (Rhynchosporium secalis (Barley scald fungus)).